Here is a 520-residue protein sequence, read N- to C-terminus: Membrane-bound glycerophospholipid O-acyltransferase 2 (520 aa).

6 helical membrane-spanning segments follow: residues 22 to 42, 61 to 81, 88 to 108, 184 to 204, 237 to 257, and 264 to 284; these read PIDQVNFVVCQLFALLAAIWF, TLLGLYLALFCFGWYALHFLV, CIMIIIGVENMHNYCFVFALG, FMGILAGPLCSYKDYITFIEG, LLVCGLSLLFHLTICTTLPVE, and FQATASWPTKIIYLYISLLAA. Residues Asn342 and His373 contribute to the active site. The next 3 membrane-spanning stretches (helical) occupy residues 366 to 386, 416 to 436, and 444 to 464; these read FILSAIWHGVYPGYYLTFLTG, VITWIVTQVAISYTVVPFVLL, and FYSSWYYCLHILGILVLLLLP.

Belongs to the membrane-bound acyltransferase family. As to expression, expressed in neutrophils.

The protein resides in the endoplasmic reticulum membrane. The enzyme catalyses a 1-acyl-sn-glycero-3-phosphocholine + an acyl-CoA = a 1,2-diacyl-sn-glycero-3-phosphocholine + CoA. It catalyses the reaction a 1-acyl-sn-glycero-3-phosphoethanolamine + an acyl-CoA = a 1,2-diacyl-sn-glycero-3-phosphoethanolamine + CoA. It carries out the reaction a 1-acyl-sn-glycero-3-phosphate + an acyl-CoA = a 1,2-diacyl-sn-glycero-3-phosphate + CoA. The catalysed reaction is (9Z)-hexadecenoyl-CoA + 1-hexadecanoyl-sn-glycero-3-phosphocholine = 1-hexadecanoyl-2-(9Z-hexadecenoyl)-sn-glycero-3-phosphocholine + CoA. The enzyme catalyses 1-hexadecanoyl-sn-glycero-3-phosphoethanolamine + (9Z)-octadecenoyl-CoA = 1-hexadecanoyl-2-(9Z-octadecenoyl)-sn-glycero-3-phosphoethanolamine + CoA. It catalyses the reaction 1-hexadecanoyl-sn-glycero-3-phosphoethanolamine + (9Z)-hexadecenoyl-CoA = 1-hexadecanoyl-2-(9Z)-hexadecenoyl-sn-glycero-3-phosphoethanolamine + CoA. It carries out the reaction 1-(9Z-octadecenoyl)-sn-glycero-3-phospho-L-serine + hexadecanoyl-CoA = 1-(9Z)-octadecenoyl-2-hexadecanoyl-sn-glycero-3-phosphoserine + CoA. The catalysed reaction is (9Z,12Z)-octadecadienoyl-CoA + 1-hexadecanoyl-sn-glycero-3-phosphocholine = 1-hexadecanoyl-2-(9Z,12Z-octadecadienoyl)-sn-glycero-3-phosphocholine + CoA. The enzyme catalyses 1-hexadecanoyl-sn-glycero-3-phosphocholine + (9Z)-octadecenoyl-CoA = 1-hexadecanoyl-2-(9Z-octadecenoyl)-sn-glycero-3-phosphocholine + CoA. It catalyses the reaction 1-hexadecanoyl-sn-glycero-3-phosphate + (9Z)-hexadecenoyl-CoA = 1-hexadecanoyl-2-[(9Z)-hexadec-9-enoyl]-sn-glycero-3-phosphate + CoA. It carries out the reaction 1-hexadecanoyl-sn-glycero-3-phosphate + (9Z)-octadecenoyl-CoA = 1-hexadecanoyl-2-(9Z-octadecenoyl)-sn-glycero-3-phosphate + CoA. The catalysed reaction is a 1-O-(1Z-alkenyl)-sn-glycero-3-phosphocholine + (9Z)-octadecenoyl-CoA = 1-O-(1Z)-alkenyl-2-(9Z)-octadecenoyl-sn-glycero-3-phosphocholine + CoA. The enzyme catalyses a 1-O-(1Z-alkenyl)-sn-glycero-3-phosphoethanolamine + (9Z)-octadecenoyl-CoA = 1-O-(1Z)-alkenyl-2-(9Z)-octadecenoyl-sn-glycero-3-phosphoethanolamine + CoA. It catalyses the reaction 1-octadecanoyl-sn-glycero-3-phosphoethanolamine + (9Z)-octadecenoyl-CoA = 1-octadecanoyl-2-(9Z-octadecenoyl)-sn-glycero-3-phosphoethanolamine + CoA. It carries out the reaction 1-octadecanoyl-sn-glycero-3-phosphocholine + (9Z)-octadecenoyl-CoA = 1-octadecanoyl-2-(9Z-octadecenoyl)-sn-glycero-3-phosphocholine + CoA. The catalysed reaction is 1-(9Z-octadecenoyl)-sn-glycero-3-phosphoethanolamine + (9Z)-octadecenoyl-CoA = 1,2-di-(9Z-octadecenoyl)-sn-glycero-3-phosphoethanolamine + CoA. It functions in the pathway lipid metabolism; phospholipid metabolism. Its activity is regulated as follows. Partially inhibited by thimerosal. Functionally, acyltransferase which catalyzes the transfer of an acyl group from an acyl-CoA to a lysophospholipid leading to the production of a phospholipid and participates in the reacylation step of the phospholipid remodeling pathway also known as the Lands cycle. Catalyzes preferentially the acylation of lysophosphatidylethanolamine (1-acyl-sn-glycero-3-phosphoethanolamine or LPE) and lysophosphatidic acid (LPA) and to a lesser extend lysophosphatidylcholine (LPC) and lysophosphatidylserine (LPS). Prefers oleoyl-CoA as the acyl donor. May be involved in chondrocyte differentiation. The polypeptide is Membrane-bound glycerophospholipid O-acyltransferase 2 (Homo sapiens (Human)).